A 789-amino-acid chain; its full sequence is MFCKISRAPARMGSRIFTQSTLRSFSCAPVAANIDAKKVAMSNFEKNKFINYQRIKDNLEIVKKRLNRPLTYSEKILYGHLDDPVNQDIERGVSYLKLRPDRVACQDATAQMAILQFMSAGMPEVAVPVTVHCDHLIEAYEGGPIDLERANVTNKEVYDFLQTACAKYNIGFWRPGSGIIHQIVLENYAFPGGLLIGTDSHTPNAGGLGMVAIGVGGADAVDVMANLPWELKCPKVIGVKLTGQLKGWTSPKDVILKVAGILTVKGGTGAIVEYFGPGVESLSCTGMGTICNMGAEIGATTSIFPFNPRMSEYLRATNRSAIADYAEEFAPIIAADENAHYDQIIEIDLNTLEPHLNGPFTPDLATPISKFKEAVKKNDWPQELKVGLIGSCTNSSYEDMSRAASICQQAIDKGIKTKSLFTITPGSEQVRATLTRDGQLDTMRKAGGIVLANACGPCIGQWKRTDVKKGEKNSIVTSYNRNFTGRNDANPATHAFVTSPDIVTAMVFSGDMNFNPLTDTLKDKDGNDFKFEPPTGAGLPSKGYDPGSNTYVAPSSVNVKDVAIDPHSKRLQRLTPFKKWDGKDMKGLKILIKAKGKCTTDHISAAGPWLKYRGHLQNISNNYMIGAINAENGEANKLKDQLTGEYKTVPNVAIDYRDHGIRWVTLGEQNFGEGSSREHAALEPRYLGGAAVITKSFARIHETNLKKQGLLPLTFADPAAYDKISPFDTVDIDGLTTFAPGKPLTLVVHPADGSAEWSTKLNHTFNKDQIEWFKAGSALNHMANMHKQK.

The N-terminal 32 residues, 1-32 (MFCKISRAPARMGSRIFTQSTLRSFSCAPVAA), are a transit peptide targeting the mitochondrion. Residues Gln106 and 199-201 (DSH) each bind substrate. [4Fe-4S] cluster contacts are provided by Cys392, Cys455, and Cys458. Residues Arg481, Arg486, Arg613, and 676-677 (SR) each bind substrate.

Belongs to the aconitase/IPM isomerase family. Monomer. It depends on [4Fe-4S] cluster as a cofactor.

It is found in the mitochondrion. It catalyses the reaction citrate = D-threo-isocitrate. Its pathway is carbohydrate metabolism; tricarboxylic acid cycle; isocitrate from oxaloacetate: step 2/2. Its function is as follows. Catalyzes the isomerization of citrate to isocitrate via cis-aconitate, a step in the citric acid cycle. This is Aconitate hydratase, mitochondrial from Schizosaccharomyces pombe (strain 972 / ATCC 24843) (Fission yeast).